The sequence spans 345 residues: MNYKLFSPYTIKDVTLKNRIVMSPMCMYSSENGDGQVTNFHLIHYGTRAAGQVGLVMIEATAVLPEGRISNKDLGIWDDSLIEGLHKTTTFIHDNGAKAAIQLAHAGRKAELETDALAPSAIPFNETMKMPIEMSKHQIKDTVLAFQQAAVRSKQAGFDVIEIHGAHGYLINEFLSPLTNKRTDEYGGSPENRYRFLREIIDSINEVWNGPLFVRISANDYHPDGLTVQDYVQYTKWMKEQGVDLIDCSSGAVVPARIDVYPGYQVQYAKHIKEHANIATGAVGLITTGAQAEQILNNNEADLIFIGRELLRNPYFPRIAANELGFELEEPYQYERAPGKISTNK.

23 to 26 (SPMC) lines the FMN pocket. A substrate-binding site is contributed by tyrosine 28. Residues alanine 60 and glutamine 102 each contribute to the FMN site. 164–167 (HGAH) serves as a coordination point for substrate. Residues arginine 215 and 307 to 308 (GR) contribute to the FMN site.

It belongs to the NADH:flavin oxidoreductase/NADH oxidase family. NamA subfamily. As to quaternary structure, homotetramer. It depends on FMN as a cofactor.

The catalysed reaction is A + NADPH + H(+) = AH2 + NADP(+). Functionally, catalyzes the reduction of the double bond of an array of alpha,beta-unsaturated aldehydes and ketones. It also reduces the nitro group of nitroester and nitroaromatic compounds. It could have a role in detoxification processes. The protein is NADPH dehydrogenase of Bacillus cereus (strain ATCC 10987 / NRS 248).